Consider the following 401-residue polypeptide: MASGSYWCYSCSRFVWVSDSISCPDCDGGFLELIQEPLDFTPSDSFTTTTTTQHRSPTRFPPPSSSSSTPSASMHADNSPTPTIVTRTRSNRSPNPVIVLRGSAAAPSSDVVSEGLDRSAFQMYYDDGTDSGLRPLPPSMTEFLLGSGFDRLLDQISQIELNTNRNLRSCEHPPASKSAIEALPLIEIDPTHLLSDSQSHCAVCKENFVLKSSAREMPCNHIYHPDCILPWLAIRNSCPVCRHELPAEDLTDGTGAALTAVTATAEEEEDSAAGLTIWRLPGGGFAVGRIPGGWRGGDRMMPVVYTEVDGGRLGDERLPRRVAWGSRRGGRDGGGSRERGGGFAGRIMRLFGCFSGSSGSIAAAAAASSGSGSRIRVTRRTRSFSMFSTASSSSRRRNWLA.

The tract at residues 41-93 (TPSDSFTTTTTTQHRSPTRFPPPSSSSSTPSASMHADNSPTPTIVTRTRSNRS) is disordered. Polar residues predominate over residues 76–93 (ADNSPTPTIVTRTRSNRS). The RING-type; atypical zinc finger occupies 201-242 (CAVCKENFVLKSSAREMPCNHIYHPDCILPWLAIRNSCPVCR).

It carries out the reaction S-ubiquitinyl-[E2 ubiquitin-conjugating enzyme]-L-cysteine + [acceptor protein]-L-lysine = [E2 ubiquitin-conjugating enzyme]-L-cysteine + N(6)-ubiquitinyl-[acceptor protein]-L-lysine.. It functions in the pathway protein modification; protein ubiquitination. Its function is as follows. Probable E3 ubiquitin-protein ligase that may possess E3 ubiquitin ligase activity in vitro. The chain is Probable E3 ubiquitin-protein ligase RHC2A from Arabidopsis thaliana (Mouse-ear cress).